A 205-amino-acid chain; its full sequence is Non-specific lipid transfer protein GPI-anchored 13 (205 aa).

Positions Met-1–Ala-24 are cleaved as a signal peptide. 4 disulfide bridges follow: Cys-36–Cys-77, Cys-46–Cys-61, Cys-62–Cys-104, and Cys-75–Cys-113. 3 N-linked (GlcNAc...) asparagine glycosylation sites follow: Asn-93, Asn-137, and Asn-165. The segment at Ser-141–Thr-176 is disordered. Asn-177 carries GPI-anchor amidated asparagine lipidation. A propeptide spans His-178–Val-205 (removed in mature form).

It belongs to the plant LTP family. In terms of tissue distribution, expressed preferentially in expanding leaves and sepals, restricted to the distal side. Expressed at low levels in roots and stems.

It is found in the cell membrane. Functionally, probable lipid transfer protein. In Arabidopsis thaliana (Mouse-ear cress), this protein is Non-specific lipid transfer protein GPI-anchored 13.